We begin with the raw amino-acid sequence, 71 residues long: Ubiquinol-cytochrome c reductase complex assembly factor 6 (71 aa).

Over 1-8 (MPAGVPMS) the chain is Mitochondrial matrix. Residues 9–25 (TYLKMLAASLLAMCAGA) traverse the membrane as a helical; Signal-anchor for type II membrane protein segment. Residues 26–71 (EVVHRYYRPDLTIPEIPPKRGELKTELLGLKERKHKPQISQQEELK) are Mitochondrial intermembrane-facing. Residues 52–71 (LLGLKERKHKPQISQQEELK) are disordered.

Belongs to the UQCC6 family. As to quaternary structure, interacts with UQCRC1. Interacts with UQCRQ. Interacts with UQCC5. Forms a complex, named COMB/coordinator of mitochondrial CYTB biogenesis, composed of UQCC1, UQCC2, UQCC4, UQCC5 and UQCC6; stabilizes nascent cytochrome b/MT-CYB and promotes its membrane insertion. Forms a complex, named COMA, composed of UQCC1, UQCC2 and UQCC4; activates MT-CYB translation. Forms a complex, named COMC, composed of UQCC1, UQCC2; UQCC3 and UQCC4; mediates MT-CYB hemylation and association with the first nuclear-encoded complex III subunit UQCRQ. Interacts with MT-CYB.

It is found in the mitochondrion inner membrane. Functionally, required for the assembly and stability of the mitochondrial ubiquinol-cytochrome c reductase complex (complex III (CIII) or cytochrome b-c1 complex), a multisubunit transmembrane complex that is part of the mitochondrial electron transport chain (ETC) which drives oxidative phosphorylation. Mediates early complex III biogenesis. Participates in regulating the levels of electron transport chain proteins, and therefore energy supply, in response to changes in energy demand. Also required for cytochrome c oxidase complex (complex IV) assembly. The polypeptide is Ubiquinol-cytochrome c reductase complex assembly factor 6 (Pongo abelii (Sumatran orangutan)).